The chain runs to 157 residues: Probable succinate transporter subunit YjjB (157 aa).

4 helical membrane passes run 8–28, 55–75, 87–107, and 129–149; these read LALMQDMILSAIPAVGFAMVF, AGFNIEWSTFMASLLVGSIGI, VFTVAAVIPMFPGISAYTAMI, and FLKASSIVGALSIGLSVPGLW.

It belongs to the ThrE exporter (TC 2.A.79) family. The transporter is composed of YjjB and YjjP.

The protein localises to the cell inner membrane. Involved in succinate export with YjjP. Both proteins are required for export. The sequence is that of Probable succinate transporter subunit YjjB from Salmonella agona (strain SL483).